Reading from the N-terminus, the 312-residue chain is DNA-directed RNA polymerase subunit alpha (312 aa).

An alpha N-terminal domain (alpha-NTD) region spans residues 1–226 (MIEFEKPKIT…DHLNLFVDLS (226 aa)). The alpha C-terminal domain (alpha-CTD) stretch occupies residues 243 to 312 (TERVLDKIIE…ELGLSLKKRK (70 aa)).

The protein belongs to the RNA polymerase alpha chain family. In terms of assembly, homodimer. The RNAP catalytic core consists of 2 alpha, 1 beta, 1 beta' and 1 omega subunit. When a sigma factor is associated with the core the holoenzyme is formed, which can initiate transcription.

The enzyme catalyses RNA(n) + a ribonucleoside 5'-triphosphate = RNA(n+1) + diphosphate. In terms of biological role, DNA-dependent RNA polymerase catalyzes the transcription of DNA into RNA using the four ribonucleoside triphosphates as substrates. In Lactococcus lactis subsp. cremoris (strain SK11), this protein is DNA-directed RNA polymerase subunit alpha.